A 212-amino-acid chain; its full sequence is Deoxyribose-phosphate aldolase (212 aa).

The Proton donor/acceptor role is filled by D89. K151 functions as the Schiff-base intermediate with acetaldehyde in the catalytic mechanism. Residue K180 is the Proton donor/acceptor of the active site.

It belongs to the DeoC/FbaB aldolase family. DeoC type 1 subfamily.

It localises to the cytoplasm. It catalyses the reaction 2-deoxy-D-ribose 5-phosphate = D-glyceraldehyde 3-phosphate + acetaldehyde. The protein operates within carbohydrate degradation; 2-deoxy-D-ribose 1-phosphate degradation; D-glyceraldehyde 3-phosphate and acetaldehyde from 2-deoxy-alpha-D-ribose 1-phosphate: step 2/2. Functionally, catalyzes a reversible aldol reaction between acetaldehyde and D-glyceraldehyde 3-phosphate to generate 2-deoxy-D-ribose 5-phosphate. The sequence is that of Deoxyribose-phosphate aldolase from Clostridium botulinum (strain Kyoto / Type A2).